Here is a 319-residue protein sequence, read N- to C-terminus: Acetyl esterase (319 aa).

The short motif at 91-93 (HGG) is the Involved in the stabilization of the negatively charged intermediate by the formation of the oxyanion hole element. Active-site residues include S165, D262, and H292.

Belongs to the 'GDXG' lipolytic enzyme family. As to quaternary structure, homodimer. Interacts with MalT and MelA.

It localises to the cytoplasm. Its function is as follows. Displays esterase activity towards short chain fatty esters (acyl chain length of up to 8 carbons). Able to hydrolyze triacetylglycerol (triacetin) and tributyrylglycerol (tributyrin), but not trioleylglycerol (triolein) or cholesterol oleate. Negatively regulates MalT activity by antagonizing maltotriose binding. Inhibits MelA galactosidase activity. This is Acetyl esterase from Escherichia coli O7:K1 (strain IAI39 / ExPEC).